The chain runs to 680 residues: DNA-directed RNA polymerase subunit beta' (680 aa).

Residues C69, C71, C87, and C90 each coordinate Zn(2+). D489, D491, and D493 together coordinate Mg(2+).

This sequence belongs to the RNA polymerase beta' chain family. RpoC1 subfamily. In plastids the minimal PEP RNA polymerase catalytic core is composed of four subunits: alpha, beta, beta', and beta''. When a (nuclear-encoded) sigma factor is associated with the core the holoenzyme is formed, which can initiate transcription. Requires Mg(2+) as cofactor. The cofactor is Zn(2+).

The protein localises to the plastid. The protein resides in the chloroplast. The catalysed reaction is RNA(n) + a ribonucleoside 5'-triphosphate = RNA(n+1) + diphosphate. Functionally, DNA-dependent RNA polymerase catalyzes the transcription of DNA into RNA using the four ribonucleoside triphosphates as substrates. This chain is DNA-directed RNA polymerase subunit beta', found in Olimarabidopsis pumila (Dwarf rocket).